A 545-amino-acid chain; its full sequence is Glucose-6-phosphate isomerase (545 aa).

Residue Glu-351 is the Proton donor of the active site. Residues His-382 and Lys-510 contribute to the active site.

Belongs to the GPI family.

The protein localises to the cytoplasm. The catalysed reaction is alpha-D-glucose 6-phosphate = beta-D-fructose 6-phosphate. Its pathway is carbohydrate biosynthesis; gluconeogenesis. It participates in carbohydrate degradation; glycolysis; D-glyceraldehyde 3-phosphate and glycerone phosphate from D-glucose: step 2/4. Functionally, catalyzes the reversible isomerization of glucose-6-phosphate to fructose-6-phosphate. In Shewanella baltica (strain OS185), this protein is Glucose-6-phosphate isomerase.